Here is an 801-residue protein sequence, read N- to C-terminus: Phosphatidylinositol 3-kinase pik3 (801 aa).

Positions Val14 to Gln166 constitute a C2 PI3K-type domain. Residues Asp257–Glu439 enclose the PIK helical domain. The PI3K/PI4K catalytic domain maps to Ile515 to Phe785. The tract at residues Val521 to Gln527 is G-loop. A catalytic loop region spans residues Gly654 to Asn662. The tract at residues His673–Ser694 is activation loop.

This sequence belongs to the PI3/PI4-kinase family. As to quaternary structure, component of the autophagy-specific vps34 PI3-kinase complex I composed of vps15, atg6, pik3/vps34, atg14 and atg38. Also a component of the VPS34 PI3-kinase complex II composed of atg6, pik3, vps15 and vps38.

The enzyme catalyses a 1,2-diacyl-sn-glycero-3-phospho-(1D-myo-inositol) + ATP = a 1,2-diacyl-sn-glycero-3-phospho-(1D-myo-inositol-3-phosphate) + ADP + H(+). Functionally, phosphatidylinositol 3-kinase that functions as a part of the autophagy-specific VPS34 PI3-kinase complex I that plays a role in autophagosome assembly. This complex is essential to recruit the atg8-phosphatidylinositol conjugate and the atg12-atg5 conjugate to the pre-autophagosomal structure. Also functions as part of the VPS34 PI3-kinase complex II. This chain is Phosphatidylinositol 3-kinase pik3 (pik3), found in Schizosaccharomyces pombe (strain 972 / ATCC 24843) (Fission yeast).